The chain runs to 309 residues: MNSPDIALIKTYLLTLQDNICAALAQADGHAEFTEECWVREEGGGGRSRVLVNGAVFEQAGVNFSHVSGAMLPASATAHRPELAGRSFQALGVSLVIHPLNPYLPTSHANVRFFIAEKPGEDAVWWFGGGFDLTPYYGFEEDAIHWHQVAHSLCQPFGEQIYPRYKKWCDDYFYIKHRQEARGIGGLFFDDLNSPDFMTCFNFTQAVGDGFLAAYMPIVARRKALGWGDRERQFQLYRRGRYVEFNLVWDRGTLFGLQTGGRTESILMSLPPLVRWEYNYQPEADSAEAALYRDFLPVKDWLAIKGETH.

Serine 94 contacts substrate. Positions 98 and 108 each coordinate a divalent metal cation. The Proton donor role is filled by histidine 108. Residue 110–112 participates in substrate binding; the sequence is NVR. Histidine 147 and histidine 177 together coordinate a divalent metal cation. The interval 242 to 277 is important for dimerization; sequence YVEFNLVWDRGTLFGLQTGGRTESILMSLPPLVRWE. 260–262 provides a ligand contact to substrate; the sequence is GGR.

The protein belongs to the aerobic coproporphyrinogen-III oxidase family. In terms of assembly, homodimer. The cofactor is a divalent metal cation.

The protein localises to the cytoplasm. The catalysed reaction is coproporphyrinogen III + O2 + 2 H(+) = protoporphyrinogen IX + 2 CO2 + 2 H2O. It functions in the pathway porphyrin-containing compound metabolism; protoporphyrin-IX biosynthesis; protoporphyrinogen-IX from coproporphyrinogen-III (O2 route): step 1/1. Functionally, involved in the heme biosynthesis. Catalyzes the aerobic oxidative decarboxylation of propionate groups of rings A and B of coproporphyrinogen-III to yield the vinyl groups in protoporphyrinogen-IX. The sequence is that of Oxygen-dependent coproporphyrinogen-III oxidase from Yersinia pestis bv. Antiqua (strain Antiqua).